Reading from the N-terminus, the 428-residue chain is Glutamate-1-semialdehyde 2,1-aminomutase (428 aa).

Residue Lys-265 is modified to N6-(pyridoxal phosphate)lysine.

Belongs to the class-III pyridoxal-phosphate-dependent aminotransferase family. HemL subfamily. Homodimer. It depends on pyridoxal 5'-phosphate as a cofactor.

The protein localises to the cytoplasm. It carries out the reaction (S)-4-amino-5-oxopentanoate = 5-aminolevulinate. Its pathway is porphyrin-containing compound metabolism; protoporphyrin-IX biosynthesis; 5-aminolevulinate from L-glutamyl-tRNA(Glu): step 2/2. The chain is Glutamate-1-semialdehyde 2,1-aminomutase from Ruthia magnifica subsp. Calyptogena magnifica.